Consider the following 206-residue polypeptide: LexA repressor (206 aa).

Positions 28–48 form a DNA-binding region, H-T-H motif; the sequence is RAEIARELGFRSANAAEEHLK. Catalysis depends on for autocatalytic cleavage activity residues S123 and K160.

The protein belongs to the peptidase S24 family. In terms of assembly, homodimer.

The enzyme catalyses Hydrolysis of Ala-|-Gly bond in repressor LexA.. Represses a number of genes involved in the response to DNA damage (SOS response), including recA and lexA. In the presence of single-stranded DNA, RecA interacts with LexA causing an autocatalytic cleavage which disrupts the DNA-binding part of LexA, leading to derepression of the SOS regulon and eventually DNA repair. The protein is LexA repressor of Vibrio atlanticus (strain LGP32) (Vibrio splendidus (strain Mel32)).